Reading from the N-terminus, the 918-residue chain is NEDD4-like E3 ubiquitin-protein ligase WWP1 (918 aa).

The region spanning 1–116 (MATASPRSDT…THNRKLEKVK (116 aa)) is the C2 domain. Composition is skewed to polar residues over residues 150 to 164 (TNRSSSPPIEIQQNG), 209 to 219 (NGENTPSSPSQ), and 235 to 258 (SAPTSDTVNGESSSVLADNTSTMG). Disordered regions lie at residues 150–182 (TNRSSSPPIEIQQNGDALHENGDPATRTTPRLP) and 209–360 (NGEN…PHGR). Residues 266-281 (TTSTSNCTSTTTQEPP) show a composition bias toward low complexity. WW domains are found at residues 345 to 378 (EALPSGWEQRKDPHGRTYYVDHNTRTTTWERPQP), 377 to 410 (QPLPPGWERRVDDRGRVYYVDHNTRTTTWQRPTM), 452 to 485 (GPLPPGWEKRVDSTDRVYFVNHNTKTTQWEDPRT), and 492 to 525 (EPLPEGWEIRYTREGVRYFVDHNTRTTTFKDPRN). An interaction with ERBB4 region spans residues 345-525 (EALPSGWEQR…RTTTFKDPRN (181 aa)). The interval 345 to 527 (EALPSGWEQR…TTFKDPRNGK (183 aa)) is required for interaction with and ubiquitination of AMOTL2. Required for interaction with YAP1. Positions 584-918 (KPYDLRRRLY…IEETEGFGQE (335 aa)) constitute an HECT domain. The Glycyl thioester intermediate role is filled by C886.

In terms of assembly, interacts with the Crumbs complex components PALS1 and PATJ; interaction with the Crumbs complex is enhanced by WWP1's interaction with AMOTL2 and facilitates WWP1 localization to the plasma membrane. Interaction with the Crumbs complex promotes WWP1 monoubiquitination of AMOTL2, which activates the Hippo signaling pathway. Binds SCNN1A, SCNN1B, SCNN1G, WBP1, WBP2, DRPLA and adenovirus type 2 PIII. Interacts with TGIF. Binds KLF2 AND HIVEP3. Interacts with RNF11. Interacts with SPART. Interacts with NDFIP1 and NDFIP2; this interaction activates the E3 ubiquitin-protein ligase. Interacts with ERBB4 isoforms JM-B CYT-1 and JM-A CYT-1. Does not interact with ERB4 isoform JMA-A CYT-2. Interacts with SMAD1, SMAD2, SMAD3, SMAD5, SMAD6, SMAD7, TGFBR1 and TGFBR2. Associates with the TGFBR1:TGFBR2 receptor complex in presence of SMAD7. Interacts with SKIL isoform 1. Interacts with TP63 isoform 1 and isoform 2. Interacts (via WW domains) with ARRDC1, ARRDC2 and ARRDC3. Post-translationally, auto-ubiquitinated and ubiquitinated by RNF11.

The protein resides in the cytoplasm. It localises to the cell membrane. The protein localises to the nucleus. It is found in the cell junction. The enzyme catalyses S-ubiquitinyl-[E2 ubiquitin-conjugating enzyme]-L-cysteine + [acceptor protein]-L-lysine = [E2 ubiquitin-conjugating enzyme]-L-cysteine + N(6)-ubiquitinyl-[acceptor protein]-L-lysine.. The protein operates within protein modification; protein ubiquitination. Its activity is regulated as follows. Activated by NDFIP1- and NDFIP2-binding. Its function is as follows. E3 ubiquitin-protein ligase which accepts ubiquitin from an E2 ubiquitin-conjugating enzyme in the form of a thioester and then directly transfers the ubiquitin to targeted substrates. Ubiquitinates and promotes degradation of SMAD2 in response to TGF-beta signaling, which requires interaction with TGIF. Ubiquitinates ERBB4 isoforms JM-A CYT-1 and JM-B CYT-1, KLF2, KLF5 and TP63 and promotes their proteasomal degradation. Ubiquitinates RNF11 without targeting it for degradation. Ubiquitinates and promotes degradation of TGFBR1; the ubiquitination is enhanced by SMAD7. Ubiquitinates SMAD6 and SMAD7. Activates the Hippo signaling pathway in response to cell contact inhibition and recruitment to the Crumbs complex at the cell membrane. Monoubiquitinates AMOTL2 which facilitates its interaction with and activation of LATS2. LATS2 then phosphorylates YAP1, excluding it from the nucleus and therefore ultimately represses YAP1-driven transcription of target genes. The chain is NEDD4-like E3 ubiquitin-protein ligase WWP1 (Wwp1) from Mus musculus (Mouse).